A 103-amino-acid polypeptide reads, in one-letter code: Alkanal monooxygenase alpha chain (103 aa).

Heterodimer of an alpha and a beta chain.

The catalysed reaction is a long-chain fatty aldehyde + FMNH2 + O2 = a long-chain fatty acid + hnu + FMN + H2O + 2 H(+). In terms of biological role, light-emitting reaction in luminous bacteria. The chain is Alkanal monooxygenase alpha chain (luxA) from Vibrio cholerae.